The primary structure comprises 573 residues: Probable D-xylulose kinase A (573 aa).

Substrate is bound by residues His97, Arg168, Asp284, and Asn285. ATP is bound by residues Trp366, 471 to 472 (GG), and Asn475.

This sequence belongs to the FGGY kinase family.

The protein localises to the cytoplasm. It catalyses the reaction D-xylulose + ATP = D-xylulose 5-phosphate + ADP + H(+). In terms of biological role, highly specific D-xylulose kinase which participates in the catabolism of xylose. Xylose is a major component of hemicelluloses such as xylan. Most fungi utilize D-xylose via three enzymatic reactions, xylose reductase (XR), xylitol dehydrogenase (XDH), and xylulokinase, to form xylulose 5-phosphate, which enters pentose phosphate pathway. This chain is Probable D-xylulose kinase A (xkiA), found in Aspergillus clavatus (strain ATCC 1007 / CBS 513.65 / DSM 816 / NCTC 3887 / NRRL 1 / QM 1276 / 107).